A 679-amino-acid chain; its full sequence is Methionine--tRNA ligase (679 aa).

The 'HIGH' region signature appears at 15 to 25 (PYANGPVHIGH). Positions 147, 150, 160, and 163 each coordinate Zn(2+). The short motif at 332 to 336 (KISTS) is the 'KMSKS' region element. Residue threonine 335 participates in ATP binding. One can recognise a tRNA-binding domain in the interval 578 to 679 (DFMKLDIRVG…KEVKPGSEVK (102 aa)).

It belongs to the class-I aminoacyl-tRNA synthetase family. MetG type 1 subfamily. As to quaternary structure, homodimer. It depends on Zn(2+) as a cofactor.

Its subcellular location is the cytoplasm. The enzyme catalyses tRNA(Met) + L-methionine + ATP = L-methionyl-tRNA(Met) + AMP + diphosphate. Is required not only for elongation of protein synthesis but also for the initiation of all mRNA translation through initiator tRNA(fMet) aminoacylation. This chain is Methionine--tRNA ligase, found in Parabacteroides distasonis (strain ATCC 8503 / DSM 20701 / CIP 104284 / JCM 5825 / NCTC 11152).